We begin with the raw amino-acid sequence, 517 residues long: zeta-carotene-forming phytoene desaturase (517 aa).

FAD is bound at residue 11-44 (VVVGAGVGGLAAAARLAHQGFDVQVFEKTQGPGG).

Belongs to the carotenoid/retinoid oxidoreductase family. FAD serves as cofactor.

It carries out the reaction 15-cis-phytoene + 2 A = all-trans-zeta-carotene + 2 AH2. The protein operates within carotenoid biosynthesis; lycopene biosynthesis. Functionally, dehydrogenates carotenes in the cis conformation: has cis-to-trans isomerase activity and mediates dehydrogenation of cis-phytoene, producing zeta-carotene via the intermediary of phytofluene by the symmetrical introduction of 2 double bonds at the C-11 and C-11' positions of phytoene. In Myxococcus xanthus, this protein is zeta-carotene-forming phytoene desaturase (carA2).